The primary structure comprises 224 residues: UPF0758 protein Avin_02940 (224 aa).

An MPN domain is found at 102–224 (ALESPQAVRD…PLSMAEQGWL (123 aa)). Positions 173, 175, and 186 each coordinate Zn(2+). The JAMM motif signature appears at 173-186 (HNHPSGIAEPSQAD).

This sequence belongs to the UPF0758 family.

The chain is UPF0758 protein Avin_02940 from Azotobacter vinelandii (strain DJ / ATCC BAA-1303).